Reading from the N-terminus, the 407-residue chain is Arginine deiminase (407 aa).

Cys-397 serves as the catalytic Amidino-cysteine intermediate.

It belongs to the arginine deiminase family.

The protein localises to the cytoplasm. The enzyme catalyses L-arginine + H2O = L-citrulline + NH4(+). It participates in amino-acid degradation; L-arginine degradation via ADI pathway; carbamoyl phosphate from L-arginine: step 1/2. The sequence is that of Arginine deiminase from Salmonella choleraesuis (strain SC-B67).